The following is a 328-amino-acid chain: DNA-directed RNA polymerase subunit alpha (328 aa).

The interval 1 to 231 (MQTNLLKPKA…EQLAVFAQLE (231 aa)) is alpha N-terminal domain (alpha-NTD). The alpha C-terminal domain (alpha-CTD) stretch occupies residues 248–328 (FDPILLRPVD…NWPPQGLDKR (81 aa)).

It belongs to the RNA polymerase alpha chain family. As to quaternary structure, homodimer. The RNAP catalytic core consists of 2 alpha, 1 beta, 1 beta' and 1 omega subunit. When a sigma factor is associated with the core the holoenzyme is formed, which can initiate transcription.

The catalysed reaction is RNA(n) + a ribonucleoside 5'-triphosphate = RNA(n+1) + diphosphate. Its function is as follows. DNA-dependent RNA polymerase catalyzes the transcription of DNA into RNA using the four ribonucleoside triphosphates as substrates. The sequence is that of DNA-directed RNA polymerase subunit alpha from Leptothrix cholodnii (strain ATCC 51168 / LMG 8142 / SP-6) (Leptothrix discophora (strain SP-6)).